The primary structure comprises 336 residues: Phosphonate dehydrogenase (336 aa).

Residues 155 to 156 (AI), E175, 235 to 237 (PCR), and D261 each bind NAD(+). Residue R237 is part of the active site. Residue E266 is part of the active site. Catalysis depends on H292, which acts as the Proton donor. Position 292–295 (292–295 (HIGS)) interacts with NAD(+).

Homodimer.

The catalysed reaction is phosphonate + NAD(+) + H2O = phosphate + NADH + H(+). Its activity is regulated as follows. Inhibited by NaCl, NADH and sulfite. Catalyzes phosphite (phosphonate) oxidation. The sequence is that of Phosphonate dehydrogenase (ptxD) from Stutzerimonas stutzeri (Pseudomonas stutzeri).